The following is a 169-amino-acid chain: Translationally-controlled tumor protein homolog (169 aa).

The TCTP domain maps to 1 to 169; that stretch reads MLIYKDILTG…WKHGLEEMKV (169 aa).

This sequence belongs to the TCTP family.

Its subcellular location is the cytoplasm. The protein localises to the cytoskeleton. Involved in protein synthesis. Involved in microtubule stabilization. The sequence is that of Translationally-controlled tumor protein homolog from Alternaria alternata (Alternaria rot fungus).